The sequence spans 101 residues: MAQESNENGWGDFLELCSKIKTPEAFHDFFALFLTFGERESMASRFLIVQALLAEQLTQREIAQKYGVSIAQITRGSNALKAIDPKFKEFLKNLNRKYGNQ.

Residues 59 to 82 (QREIAQKYGVSIAQITRGSNALKA) mediate DNA binding.

The protein belongs to the TrpR family. As to quaternary structure, homodimer.

It is found in the cytoplasm. This protein is an aporepressor. When complexed with L-tryptophan it binds the operator region of the trp operon and prevents the initiation of transcription. This chain is Trp operon repressor homolog, found in Chlamydia caviae (strain ATCC VR-813 / DSM 19441 / 03DC25 / GPIC) (Chlamydophila caviae).